A 1349-amino-acid chain; its full sequence is Indole-3-acetaldehyde oxidase (1349 aa).

Residues 7–94 (AAVVLAVNGK…RCSVTTSEGI (88 aa)) enclose the 2Fe-2S ferredoxin-type domain. [2Fe-2S] cluster is bound by residues Cys46, Cys51, and Cys54. Residues 237 to 415 (VPVSDDGWYR…LSIFIPEWGS (179 aa)) form the FAD-binding PCMH-type domain.

This sequence belongs to the xanthine dehydrogenase family. As to quaternary structure, aldehyde oxidases (AO) are homodimers and heterodimers of AO subunits. It depends on [2Fe-2S] cluster as a cofactor. FAD serves as cofactor. The cofactor is Mo-molybdopterin. In terms of tissue distribution, mostly expressed in coleoptiles, and, to a lower extent, in mesocotyl and roots.

The protein resides in the cytoplasm. The enzyme catalyses indole-3-acetaldehyde + O2 + H2O = (indol-3-yl)acetate + H2O2 + H(+). In terms of biological role, in higher plants aldehyde oxidases (AO) appear to be homo- and heterodimeric assemblies of AO subunits with probably different physiological functions. Involved in the biosynthesis of auxin. This chain is Indole-3-acetaldehyde oxidase (AO2), found in Zea mays (Maize).